Consider the following 1525-residue polypeptide: Autophagy-related protein 2 (1525 aa).

The protein belongs to the ATG2 family.

Its subcellular location is the preautophagosomal structure membrane. The protein resides in the endoplasmic reticulum membrane. The enzyme catalyses a 1,2-diacyl-sn-glycero-3-phosphocholine(in) = a 1,2-diacyl-sn-glycero-3-phosphocholine(out). The catalysed reaction is a 1,2-diacyl-sn-glycero-3-phospho-L-serine(in) = a 1,2-diacyl-sn-glycero-3-phospho-L-serine(out). It catalyses the reaction a 1,2-diacyl-sn-glycero-3-phosphoethanolamine(in) = a 1,2-diacyl-sn-glycero-3-phosphoethanolamine(out). Its function is as follows. Lipid transfer protein required for autophagosome completion and peroxisome degradation. Tethers the edge of the isolation membrane (IM) to the endoplasmic reticulum (ER) and mediates direct lipid transfer from ER to IM for IM expansion. ATG2 binds to the ER exit site (ERES), which is the membrane source for autophagosome formation, using basic residues in its N-terminal region (NR) and to the expanding edge of the IM through its C-terminal region. The latter binding is assisted by an ATG18-PtdIns3P interaction. ATG2 then extracts phospholipids from the membrane source using its NR and transfers them to ATG9 to the IM through its predicted beta-sheet-rich structure for membrane expansion. This Eremothecium gossypii (strain ATCC 10895 / CBS 109.51 / FGSC 9923 / NRRL Y-1056) (Yeast) protein is Autophagy-related protein 2 (ATG2).